The following is a 490-amino-acid chain: Protein LMBR1L (490 aa).

Over 1 to 21 (MEAPDYEVLSVREQLFHERIR) the chain is Extracellular. Residues 1 to 59 (MEAPDYEVLSVREQLFHERIRECIISTLLFATLYILCHIFLTRFKKPAEFTTVDDEDAT) form an interaction with LGB region. Positions 1 to 76 (MEAPDYEVLS…LCTFTLAIAL (76 aa)) are LCN1-binding. Residues 22-42 (ECIISTLLFATLYILCHIFLT) form a helical membrane-spanning segment. Residues 43–66 (RFKKPAEFTTVDDEDATVNKIALE) are Cytoplasmic-facing. The chain crosses the membrane as a helical span at residues 67–87 (LCTFTLAIALGAVLLLPFSII). The Extracellular segment spans residues 88-114 (SNEVLLSLPRNYYIQWLNGSLIHGLWN). A helical transmembrane segment spans residues 115–135 (LVFLFSNLSLIFLMPFAYFFT). Topologically, residues 136–154 (ESEGFAGSRRGVLGRVYET) are cytoplasmic. Residues 155–175 (VVMLMLLTLLVLGMVWVASAI) form a helical membrane-spanning segment. Over 176-196 (LDNNKASRESLYDFWEYYLPY) the chain is Extracellular. The helical transmembrane segment at 197–217 (LYSCISFLGVLLLLVCTPLGL) threads the bilayer. Over 218–305 (ARMFSVTGKL…NLGYPLAMLC (88 aa)) the chain is Cytoplasmic. Residues 306–326 (LLVLTGLSVLIVAIHILELLI) traverse the membrane as a helical segment. The Extracellular portion of the chain corresponds to 327–350 (DEAAMPRGMQDASLGQVSFSRLGS). The chain crosses the membrane as a helical span at residues 351–371 (FGAVIQVALIFYLMVSSVVGF). Topologically, residues 372–388 (YSSPLFRSLRPRWHDTA) are cytoplasmic. The helical transmembrane segment at 389 to 409 (MTQIIGNCVCLLVLSSALPVF) threads the bilayer. Topologically, residues 410–431 (SRTLGLTRFDLLGDFGRFNWLG) are extracellular. The helical transmembrane segment at 432-452 (NFYIVFLYNAAFAGLTTLCLV) threads the bilayer. Residues 453–490 (KTFTAAVRAELIRAFGLDRLPLPVSGFPPRASRKTQHQ) lie on the Cytoplasmic side of the membrane.

This sequence belongs to the LIMR family. As to quaternary structure, dimer. Can also form higher oligomers. Interacts with LCN1; this interaction mediates the endocytosis of LCN1. Interacts with UBAC2, FAF2, VCP, AMFR, ZNRF3, CTNNB1, LRP6, GSK3A, GSK3B, FZD6, DVL2 and RNF43. Interaction with LGB and SCGB1A1 is controversial.

The protein localises to the cell membrane. It localises to the endoplasmic reticulum membrane. Functionally, plays an essential role in lymphocyte development by negatively regulating the canonical Wnt signaling pathway. In association with UBAC2 and E3 ubiquitin-protein ligase AMFR, promotes the ubiquitin-mediated degradation of CTNNB1 and Wnt receptors FZD6 and LRP6. LMBR1L stabilizes the beta-catenin destruction complex that is required for regulating CTNNB1 levels. Acts as a LCN1 receptor and can mediate its endocytosis. The polypeptide is Protein LMBR1L (LMBR1L) (Pongo abelii (Sumatran orangutan)).